A 154-amino-acid chain; its full sequence is uncharacterized protein (154 aa).

2 disordered regions span residues 23 to 63 and 79 to 154; these read ERVG…VVLK and IKAA…DENE. A compositionally biased stretch (acidic residues) spans 43–56; the sequence is PDEDGDHSDKEDEQ. Ser-50 is modified (phosphoserine). N6-acetyllysine is present on Lys-108. Ser-146 is modified (phosphoserine).

This is an uncharacterized protein from Homo sapiens (Human).